The primary structure comprises 203 residues: 22.3 kDa class VI heat shock protein (203 aa).

The sHSP domain maps to 86 to 203 (ALRRGARTTV…DAHQAAAATA (118 aa)).

The protein belongs to the small heat shock protein (HSP20) family. As to quaternary structure, may form oligomeric structures.

The protein localises to the cytoplasm. The sequence is that of 22.3 kDa class VI heat shock protein (HSP22.3) from Oryza sativa subsp. japonica (Rice).